Reading from the N-terminus, the 329-residue chain is uncharacterized protein (329 aa).

The SIS domain occupies I38–F184. Residue G56 to A61 participates in ATP binding. CBS domains lie at Q211–L267 and E270–A329.

Belongs to the SIS family. GutQ/KpsF subfamily.

This is an uncharacterized protein from Helicobacter pylori (strain ATCC 700392 / 26695) (Campylobacter pylori).